The chain runs to 219 residues: Formate dehydrogenase 2 subunit beta (cytochrome c-553) (219 aa).

One can recognise a 4Fe-4S ferredoxin-type 1 domain in the interval Lys-3–Val-32. [4Fe-4S] cluster-binding residues include Cys-12, Cys-15, Cys-18, Cys-22, Cys-74, Cys-77, Cys-82, Cys-124, Cys-141, Cys-144, Cys-156, and Cys-160. The 4Fe-4S ferredoxin-type 2 domain occupies Asp-132–Asp-171.

Heterotrimer of cytochrome c3 FDH2C and formate dehydrogenase FDH2 alpha and beta subunits that forms the FdhABC(3) complex. It depends on [4Fe-4S] cluster as a cofactor.

It is found in the periplasm. Its function is as follows. Beta chain of the formate dehydrogenase (FDH) that catalyzes the reversible two-electron oxidation of formate to carbon dioxide. The beta chain is an electron transfer unit. This is Formate dehydrogenase 2 subunit beta (cytochrome c-553) from Nitratidesulfovibrio vulgaris (strain ATCC 29579 / DSM 644 / CCUG 34227 / NCIMB 8303 / VKM B-1760 / Hildenborough) (Desulfovibrio vulgaris).